The chain runs to 194 residues: Peptidyl-tRNA hydrolase (194 aa).

Residue Y16 participates in tRNA binding. Catalysis depends on H21, which acts as the Proton acceptor. The tRNA site is built by F67, N69, and N115.

The protein belongs to the PTH family. As to quaternary structure, monomer.

The protein localises to the cytoplasm. The enzyme catalyses an N-acyl-L-alpha-aminoacyl-tRNA + H2O = an N-acyl-L-amino acid + a tRNA + H(+). Functionally, hydrolyzes ribosome-free peptidyl-tRNAs (with 1 or more amino acids incorporated), which drop off the ribosome during protein synthesis, or as a result of ribosome stalling. Catalyzes the release of premature peptidyl moieties from peptidyl-tRNA molecules trapped in stalled 50S ribosomal subunits, and thus maintains levels of free tRNAs and 50S ribosomes. In Klebsiella pneumoniae (strain 342), this protein is Peptidyl-tRNA hydrolase.